Reading from the N-terminus, the 301-residue chain is Light-independent protochlorophyllide reductase iron-sulfur ATP-binding protein (301 aa).

The disordered stretch occupies residues 1–26 (MSNGSVPVSGIGGRGDGEGSSQVHME). ATP is bound by residues 44-49 (GIGKST) and K73. S48 serves as a coordination point for Mg(2+). [4Fe-4S] cluster is bound by residues C129 and C163. ATP is bound at residue 214 to 215 (NR).

This sequence belongs to the NifH/BchL/ChlL family. Homodimer. Protochlorophyllide reductase is composed of three subunits; BchL, BchN and BchB. It depends on [4Fe-4S] cluster as a cofactor.

It catalyses the reaction chlorophyllide a + oxidized 2[4Fe-4S]-[ferredoxin] + 2 ADP + 2 phosphate = protochlorophyllide a + reduced 2[4Fe-4S]-[ferredoxin] + 2 ATP + 2 H2O. It participates in porphyrin-containing compound metabolism; bacteriochlorophyll biosynthesis (light-independent). In terms of biological role, component of the dark-operative protochlorophyllide reductase (DPOR) that uses Mg-ATP and reduced ferredoxin to reduce ring D of protochlorophyllide (Pchlide) to form chlorophyllide a (Chlide). This reaction is light-independent. The L component serves as a unique electron donor to the NB-component of the complex, and binds Mg-ATP. The polypeptide is Light-independent protochlorophyllide reductase iron-sulfur ATP-binding protein (Halorhodospira halophila (strain DSM 244 / SL1) (Ectothiorhodospira halophila (strain DSM 244 / SL1))).